The chain runs to 229 residues: Uracil-DNA glycosylase (229 aa).

Asp-64 functions as the Proton acceptor in the catalytic mechanism.

This sequence belongs to the uracil-DNA glycosylase (UDG) superfamily. UNG family.

The protein localises to the cytoplasm. The enzyme catalyses Hydrolyzes single-stranded DNA or mismatched double-stranded DNA and polynucleotides, releasing free uracil.. Excises uracil residues from the DNA which can arise as a result of misincorporation of dUMP residues by DNA polymerase or due to deamination of cytosine. The protein is Uracil-DNA glycosylase of Klebsiella pneumoniae (strain 342).